The primary structure comprises 187 residues: Ribosome-recycling factor (187 aa).

Belongs to the RRF family.

It is found in the cytoplasm. Functionally, responsible for the release of ribosomes from messenger RNA at the termination of protein biosynthesis. May increase the efficiency of translation by recycling ribosomes from one round of translation to another. The sequence is that of Ribosome-recycling factor from Rhodopseudomonas palustris (strain BisB5).